Here is a 967-residue protein sequence, read N- to C-terminus: Alanine--tRNA ligase, cytoplasmic (967 aa).

Residues His-605, His-609, Cys-724, and His-728 each contribute to the Zn(2+) site.

Belongs to the class-II aminoacyl-tRNA synthetase family. In terms of assembly, monomer. Requires Zn(2+) as cofactor. In terms of processing, the N-terminus is blocked.

It is found in the cytoplasm. The catalysed reaction is tRNA(Ala) + L-alanine + ATP = L-alanyl-tRNA(Ala) + AMP + diphosphate. Functionally, catalyzes the attachment of alanine to tRNA(Ala) in a two-step reaction: alanine is first activated by ATP to form Ala-AMP and then transferred to the acceptor end of tRNA(Ala). Also edits incorrectly charged tRNA(Ala) via its editing domain. The protein is Alanine--tRNA ligase, cytoplasmic of Bombyx mori (Silk moth).